An 88-amino-acid chain; its full sequence is Small ribosomal subunit protein uS17 (88 aa).

This sequence belongs to the universal ribosomal protein uS17 family. Part of the 30S ribosomal subunit.

Its function is as follows. One of the primary rRNA binding proteins, it binds specifically to the 5'-end of 16S ribosomal RNA. This Azotobacter vinelandii (strain DJ / ATCC BAA-1303) protein is Small ribosomal subunit protein uS17.